The primary structure comprises 377 residues: Probable G-protein coupled receptor F27E5.8 (377 aa).

At 1–34 the chain is on the extracellular side; the sequence is MSEQDSSSPKYMRFLLGNFTSAEMVTDGNFLIYC. Asparagine 18 carries an N-linked (GlcNAc...) asparagine glycan. A helical membrane pass occupies residues 35 to 55; sequence IEMGLLVIGVLENIFMIGAVF. Topologically, residues 56 to 71 are cytoplasmic; sequence STSCLHLNLRILICNC. The helical transmembrane segment at 72 to 92 threads the bilayer; the sequence is CLGFILMAVGRAMIAVPLCIA. The Extracellular portion of the chain corresponds to 93-105; it reads HLRDVDISSHAWC. The chain crosses the membrane as a helical span at residues 106 to 126; the sequence is FIANAVHHSSADSVCLSFVFI. At 127-144 the chain is on the cytoplasmic side; that stretch reads MLERTAGTIWSKDYEKTK. A helical transmembrane segment spans residues 145-165; sequence IHIFPCIFAFLQWFIPMFMIL. Residues 166–195 are Extracellular-facing; the sequence is GNFLDRANRMEHFLLYPHLPCQIEYLTPTM. A helical membrane pass occupies residues 196-216; it reads FMITIFIIVIGFIASVGGITI. The Cytoplasmic portion of the chain corresponds to 217-251; that stretch reads VYNKNIKKYNTRDIWFNTVNLSERYQITENIRSTH. Residues 252–272 traverse the membrane as a helical segment; the sequence is LLFPLLALMLIFSTLSVSVLI. Over 273–303 the chain is Extracellular; that stretch reads YGGYWVSVMTKEPARFEEVVKWFGRGGEAAQ. Residues 304–324 traverse the membrane as a helical segment; that stretch reads LFDIITAIYTISFPICAFICH. At 325–377 the chain is on the cytoplasmic side; the sequence is PNLFRFLRKFIGWNSYAVRPSNLNEIGGFEMSTAPIRTQTEFHFQELSRQWNT.

The protein belongs to the G-protein coupled receptor 1 family.

It is found in the cell membrane. The chain is Probable G-protein coupled receptor F27E5.8 from Caenorhabditis elegans.